Here is a 370-residue protein sequence, read N- to C-terminus: Lipoyl synthase, mitochondrial (370 aa).

[4Fe-4S] cluster contacts are provided by Cys-104, Cys-109, Cys-115, Cys-135, Cys-139, Cys-142, and Ser-350. The Radical SAM core domain occupies 118–339 (GGDKSKATAT…KQKALELGFL (222 aa)).

The protein belongs to the radical SAM superfamily. Lipoyl synthase family. It depends on [4Fe-4S] cluster as a cofactor.

It localises to the mitochondrion. It catalyses the reaction [[Fe-S] cluster scaffold protein carrying a second [4Fe-4S](2+) cluster] + N(6)-octanoyl-L-lysyl-[protein] + 2 oxidized [2Fe-2S]-[ferredoxin] + 2 S-adenosyl-L-methionine + 4 H(+) = [[Fe-S] cluster scaffold protein] + N(6)-[(R)-dihydrolipoyl]-L-lysyl-[protein] + 4 Fe(3+) + 2 hydrogen sulfide + 2 5'-deoxyadenosine + 2 L-methionine + 2 reduced [2Fe-2S]-[ferredoxin]. The protein operates within protein modification; protein lipoylation via endogenous pathway; protein N(6)-(lipoyl)lysine from octanoyl-[acyl-carrier-protein]: step 2/2. Functionally, catalyzes the radical-mediated insertion of two sulfur atoms into the C-6 and C-8 positions of the octanoyl moiety bound to the lipoyl domains of lipoate-dependent enzymes, thereby converting the octanoylated domains into lipoylated derivatives. The sequence is that of Lipoyl synthase, mitochondrial from Kluyveromyces lactis (strain ATCC 8585 / CBS 2359 / DSM 70799 / NBRC 1267 / NRRL Y-1140 / WM37) (Yeast).